The following is a 308-amino-acid chain: Probable lipid phosphate phosphatase 4 (308 aa).

6 consecutive transmembrane segments (helical) span residues Trp26–His46, Ile66–Tyr86, Val93–Thr113, Ser162–Leu182, Gly193–Ile213, and Val226–Pro246. The interval Met274–Phe308 is disordered. Positions Pro296–Phe308 are enriched in basic and acidic residues.

It belongs to the PA-phosphatase related phosphoesterase family.

It localises to the membrane. This Arabidopsis thaliana (Mouse-ear cress) protein is Probable lipid phosphate phosphatase 4 (LPP4).